We begin with the raw amino-acid sequence, 320 residues long: uncharacterized protein (320 aa).

7 helical membrane passes run 107-127 (LSKENMLMLILSTIVAIAGIY), 131-151 (VALLIASMIIAPLLGPNIALS), 169-189 (LIAELIFVIILSMIAGHYLPI), 200-220 (ITLDFWSIIIALSAGIAGSLS), 228-248 (IAVGVMIAIALLPPLAVFGLL), 260-280 (ALILFLINMIAINLSAIVIFS), and 299-319 (TLYAILLWVTLFIAIFVLIIY).

The protein localises to the cell membrane. This is an uncharacterized protein from Methanocaldococcus jannaschii (strain ATCC 43067 / DSM 2661 / JAL-1 / JCM 10045 / NBRC 100440) (Methanococcus jannaschii).